The sequence spans 472 residues: Selenium-binding protein 2 (472 aa).

The residue at position 467 (serine 467) is a Phosphoserine.

This sequence belongs to the selenium-binding protein family. Post-translationally, the N-terminus is blocked. In terms of tissue distribution, mainly expressed in liver.

It is found in the nucleus. The protein localises to the cytoplasm. It localises to the cytosol. Its subcellular location is the membrane. Functionally, selenium- and acetaminophen-binding protein which may be involved in the sensing of reactive xenobiotics in the cytoplasm. May be involved in intra-Golgi protein transport. This chain is Selenium-binding protein 2 (Selenbp2), found in Mus musculus (Mouse).